Consider the following 393-residue polypeptide: Chorismate synthase (393 aa).

The NADP(+) site is built by arginine 40 and arginine 46. FMN is bound by residues 129-131, 249-250, glycine 301, 316-320, and arginine 342; these read RSS, QA, and KPIPT.

The protein belongs to the chorismate synthase family. Homotetramer. The cofactor is FMNH2.

The enzyme catalyses 5-O-(1-carboxyvinyl)-3-phosphoshikimate = chorismate + phosphate. It functions in the pathway metabolic intermediate biosynthesis; chorismate biosynthesis; chorismate from D-erythrose 4-phosphate and phosphoenolpyruvate: step 7/7. Catalyzes the anti-1,4-elimination of the C-3 phosphate and the C-6 proR hydrogen from 5-enolpyruvylshikimate-3-phosphate (EPSP) to yield chorismate, which is the branch point compound that serves as the starting substrate for the three terminal pathways of aromatic amino acid biosynthesis. This reaction introduces a second double bond into the aromatic ring system. This Pelobacter propionicus (strain DSM 2379 / NBRC 103807 / OttBd1) protein is Chorismate synthase.